The sequence spans 450 residues: UDP-N-acetylmuramoylalanine--D-glutamate ligase (450 aa).

Residue 119-125 participates in ATP binding; the sequence is GSNGKTT.

This sequence belongs to the MurCDEF family.

It is found in the cytoplasm. The enzyme catalyses UDP-N-acetyl-alpha-D-muramoyl-L-alanine + D-glutamate + ATP = UDP-N-acetyl-alpha-D-muramoyl-L-alanyl-D-glutamate + ADP + phosphate + H(+). Its pathway is cell wall biogenesis; peptidoglycan biosynthesis. In terms of biological role, cell wall formation. Catalyzes the addition of glutamate to the nucleotide precursor UDP-N-acetylmuramoyl-L-alanine (UMA). The sequence is that of UDP-N-acetylmuramoylalanine--D-glutamate ligase from Streptococcus pneumoniae (strain CGSP14).